The following is a 505-amino-acid chain: UDP-N-acetylmuramoyl-L-alanyl-D-glutamate--2,6-diaminopimelate ligase (505 aa).

S42 contributes to the UDP-N-acetyl-alpha-D-muramoyl-L-alanyl-D-glutamate binding site. 126–132 (GTNGKTT) contributes to the ATP binding site. Residues 168–169 (TT), S195, Q201, and R203 contribute to the UDP-N-acetyl-alpha-D-muramoyl-L-alanyl-D-glutamate site. At K235 the chain carries N6-carboxylysine. Residues R399, 423-426 (DNPR), G474, and E478 contribute to the meso-2,6-diaminopimelate site. The Meso-diaminopimelate recognition motif motif lies at 423–426 (DNPR).

It belongs to the MurCDEF family. MurE subfamily. Mg(2+) serves as cofactor. In terms of processing, carboxylation is probably crucial for Mg(2+) binding and, consequently, for the gamma-phosphate positioning of ATP.

It localises to the cytoplasm. The catalysed reaction is UDP-N-acetyl-alpha-D-muramoyl-L-alanyl-D-glutamate + meso-2,6-diaminopimelate + ATP = UDP-N-acetyl-alpha-D-muramoyl-L-alanyl-gamma-D-glutamyl-meso-2,6-diaminopimelate + ADP + phosphate + H(+). The protein operates within cell wall biogenesis; peptidoglycan biosynthesis. Its function is as follows. Catalyzes the addition of meso-diaminopimelic acid to the nucleotide precursor UDP-N-acetylmuramoyl-L-alanyl-D-glutamate (UMAG) in the biosynthesis of bacterial cell-wall peptidoglycan. This is UDP-N-acetylmuramoyl-L-alanyl-D-glutamate--2,6-diaminopimelate ligase from Synechocystis sp. (strain ATCC 27184 / PCC 6803 / Kazusa).